The following is a 1030-amino-acid chain: Pro-apoptotic serine protease NMA111 (1030 aa).

The segment at 1–48 (MNGTTSPIAARSKRKEPPHTVDGRHPKHHRTNGEVAPAADNTPDNQDE) is disordered. A compositionally biased stretch (basic and acidic residues) spans 15–24 (KEPPHTVDGR). Residues 89–279 (VVSIRFCQTC…LPLDRPLRAL (191 aa)) form a serine protease region. Active-site charge relay system residues include His127, Asp158, and Ser240. PDZ domains follow at residues 312–384 (PEWE…LRGG) and 880–960 (AVSF…LRAM).

This sequence belongs to the peptidase S1C family.

It localises to the nucleus. In terms of biological role, nuclear serine protease which mediates apoptosis. In Chaetomium globosum (strain ATCC 6205 / CBS 148.51 / DSM 1962 / NBRC 6347 / NRRL 1970) (Soil fungus), this protein is Pro-apoptotic serine protease NMA111 (NMA111).